A 175-amino-acid polypeptide reads, in one-letter code: Nucleoside triphosphate/diphosphate phosphatase (175 aa).

Arginine 23 serves as the catalytic Proton donor. Residues asparagine 87, aspartate 103, aspartate 105, aspartate 107, aspartate 120, and glutamate 123 each contribute to the Mg(2+) site.

Belongs to the Ntdp family. It depends on Mg(2+) as a cofactor.

It catalyses the reaction a ribonucleoside 5'-triphosphate + H2O = a ribonucleoside 5'-diphosphate + phosphate + H(+). The catalysed reaction is a ribonucleoside 5'-diphosphate + H2O = a ribonucleoside 5'-phosphate + phosphate + H(+). Functionally, has nucleoside phosphatase activity towards nucleoside triphosphates and nucleoside diphosphates. The sequence is that of Nucleoside triphosphate/diphosphate phosphatase from Halalkalibacterium halodurans (strain ATCC BAA-125 / DSM 18197 / FERM 7344 / JCM 9153 / C-125) (Bacillus halodurans).